Reading from the N-terminus, the 547-residue chain is MAKIIAFDEEARRGLEKGLNTLADAVKVTLGPKGRNVVLEKAWGAPTITNDGVTIAREIELEDPYEKIGAELVKEVAKKTDDVAGDGTTTATVLAQALVKEGLRNVAAGSNPMGIKRGIEQAVATVTEKLLESAKEVETEEQIAATAGISAADPAIGAQIAKAMYAVGGGKLNKDSVITVEESNTFGVELEVTEGMRFDKGYISGYFATDMERLEAVLEDPYILLVSGKISNIKDLLPLLEKVMQSGKPLLIIAEDVEGEALSTLVVNKIRGTFKSVAVKAPGFGDRRKAQLQDIAILTGGQVISEEVGLSLETADLPLLGQARKVVVTKDDTTIVDGAGSEEQIEGRVNQIRAEIENSDSDYDREKLNERLAKLAGGVAVLKVGAATEVELKERKHRIEDAVRNAKAAVEEGIVAGGGVALIQAAHVLDNDLDLTGDEATGVRIVRDALTAPLKQIAANAGLEPGVVADKVSRLPEGEGLNAATGEYVDLMAAGINDPVKVTRSALQNAASIAALFLTTEAVVADKPQPAGAAMPGADEMGGMGGF.

Residues 29 to 32 (TLGP), 86 to 90 (DGTTT), glycine 418, 482 to 484 (NAA), and aspartate 498 contribute to the ATP site.

Belongs to the chaperonin (HSP60) family. Forms a cylinder of 14 subunits composed of two heptameric rings stacked back-to-back. Interacts with the co-chaperonin GroES.

It is found in the cytoplasm. It catalyses the reaction ATP + H2O + a folded polypeptide = ADP + phosphate + an unfolded polypeptide.. Together with its co-chaperonin GroES, plays an essential role in assisting protein folding. The GroEL-GroES system forms a nano-cage that allows encapsulation of the non-native substrate proteins and provides a physical environment optimized to promote and accelerate protein folding. In Corynebacterium efficiens (strain DSM 44549 / YS-314 / AJ 12310 / JCM 11189 / NBRC 100395), this protein is Chaperonin GroEL 2.